A 388-amino-acid polypeptide reads, in one-letter code: S-adenosylmethionine synthase (388 aa).

H16 is a binding site for ATP. D18 is a Mg(2+) binding site. E44 lines the K(+) pocket. Residues E57 and Q100 each contribute to the L-methionine site. The tract at residues 100-110 (QSPEIAQGVDR) is flexible loop. Residues 165–167 (DAK), 231–232 (KF), D240, 246–247 (RK), A263, and K267 contribute to the ATP site. L-methionine is bound at residue D240. K271 serves as a coordination point for L-methionine.

The protein belongs to the AdoMet synthase family. Homotetramer; dimer of dimers. Mg(2+) is required as a cofactor. It depends on K(+) as a cofactor.

It is found in the cytoplasm. It catalyses the reaction L-methionine + ATP + H2O = S-adenosyl-L-methionine + phosphate + diphosphate. It participates in amino-acid biosynthesis; S-adenosyl-L-methionine biosynthesis; S-adenosyl-L-methionine from L-methionine: step 1/1. In terms of biological role, catalyzes the formation of S-adenosylmethionine (AdoMet) from methionine and ATP. The overall synthetic reaction is composed of two sequential steps, AdoMet formation and the subsequent tripolyphosphate hydrolysis which occurs prior to release of AdoMet from the enzyme. The chain is S-adenosylmethionine synthase from Psychrobacter sp. (strain PRwf-1).